The primary structure comprises 785 residues: E3 UFM1-protein ligase 1 homolog (785 aa).

Positions 404–482 are disordered; that stretch reads NASFQDQDDD…AGGGGGNKKT (79 aa).

Belongs to the UFL1 family.

Functionally, E3 UFM1-protein ligase that mediates ufmylation of target proteins. The protein is E3 UFM1-protein ligase 1 homolog of Drosophila persimilis (Fruit fly).